Here is a 234-residue protein sequence, read N- to C-terminus: BTB/POZ domain-containing protein KCTD5 (234 aa).

Position 2 is an N-acetylalanine (alanine 2). In terms of domain architecture, BTB spans 44-146 (KWVRLNVGGT…LVKDKIRERD (103 aa)). The segment at 211–234 (NSPHGPASEPSEKAKILQERGSRM) is disordered. Residues 220-234 (PSEKAKILQERGSRM) show a composition bias toward basic and acidic residues.

In terms of assembly, homopentamer. Interacts (via C-terminus) with GRASP55/GORASP2. Interacts with CUL3 and with ubiquitinated proteins. Interacts with CRY1.

It is found in the cytoplasm. Its subcellular location is the cytosol. The protein resides in the nucleus. Its function is as follows. Its interaction with CUL3 suggests that it may act as a substrate adapter in some E3 ligase complex. Does not affect the function of Kv channel Kv2.1/KCNB1, Kv1.2/KCNA2, Kv4.2/KCND2 and Kv3.4/KCNC4. The sequence is that of BTB/POZ domain-containing protein KCTD5 (KCTD5) from Bos taurus (Bovine).